The sequence spans 369 residues: MSGNTLGKLFTVTTFGESHGPALGCIVDGCPPGLALCETDIQIDLDRRRPGKSRHTTQRREPDQVQILSGVFEGKTTGTPIGLLIENVDQRSRDYDKIKEQIRPGHADYTYLQKYGLRDYRGGGRSSARETAMRVAAGAIAKKYLAERHGVKIRGYLAQLGPIRAERFDWEIVEKNPFFCPDPDKISELEAYMDALRKEGDSIGARINVVATGVPPGLGEPVFDRLDADLAHALMSINAVKGVEIGVGFAAVTQKGTDHRDPLTPEGFLSNHAGGVLGGISTGQDILASIALKPTSSLRLPERTINCRGESAEVVTTGRHDPCVGIRATPIAEAMAALVLMDHLLRHRAQNMDVQPSLPSIPAYPGGGG.

2 residues coordinate NADP(+): arginine 48 and arginine 54. FMN-binding positions include 125 to 127 (RSS), 238 to 239 (NA), glycine 278, 293 to 297 (KPTSS), and arginine 319.

The protein belongs to the chorismate synthase family. In terms of assembly, homotetramer. It depends on FMNH2 as a cofactor.

It carries out the reaction 5-O-(1-carboxyvinyl)-3-phosphoshikimate = chorismate + phosphate. It participates in metabolic intermediate biosynthesis; chorismate biosynthesis; chorismate from D-erythrose 4-phosphate and phosphoenolpyruvate: step 7/7. In terms of biological role, catalyzes the anti-1,4-elimination of the C-3 phosphate and the C-6 proR hydrogen from 5-enolpyruvylshikimate-3-phosphate (EPSP) to yield chorismate, which is the branch point compound that serves as the starting substrate for the three terminal pathways of aromatic amino acid biosynthesis. This reaction introduces a second double bond into the aromatic ring system. The sequence is that of Chorismate synthase from Nitrosococcus oceani (strain ATCC 19707 / BCRC 17464 / JCM 30415 / NCIMB 11848 / C-107).